Here is a 487-residue protein sequence, read N- to C-terminus: N-succinylglutamate 5-semialdehyde dehydrogenase (487 aa).

221–226 (GSSDTG) serves as a coordination point for NAD(+). Residues E244 and C278 contribute to the active site.

Belongs to the aldehyde dehydrogenase family. AstD subfamily.

The catalysed reaction is N-succinyl-L-glutamate 5-semialdehyde + NAD(+) + H2O = N-succinyl-L-glutamate + NADH + 2 H(+). Its pathway is amino-acid degradation; L-arginine degradation via AST pathway; L-glutamate and succinate from L-arginine: step 4/5. Functionally, catalyzes the NAD-dependent reduction of succinylglutamate semialdehyde into succinylglutamate. The sequence is that of N-succinylglutamate 5-semialdehyde dehydrogenase from Burkholderia cenocepacia (strain ATCC BAA-245 / DSM 16553 / LMG 16656 / NCTC 13227 / J2315 / CF5610) (Burkholderia cepacia (strain J2315)).